The following is an 812-amino-acid chain: ATP-dependent DNA helicase PIF3 (812 aa).

Residue G247–T254 coordinates ATP. Residues H741 to V761 mediate DNA binding.

It belongs to the helicase family. PIF1 subfamily. In terms of assembly, monomer. Mg(2+) is required as a cofactor.

The protein resides in the cytoplasm. It catalyses the reaction Couples ATP hydrolysis with the unwinding of duplex DNA at the replication fork by translocating in the 5'-3' direction. This creates two antiparallel DNA single strands (ssDNA). The leading ssDNA polymer is the template for DNA polymerase III holoenzyme which synthesizes a continuous strand.. It carries out the reaction ATP + H2O = ADP + phosphate + H(+). Its function is as follows. DNA-dependent ATPase and 5'-3' DNA helicase required for the maintenance of genome stability. The sequence is that of ATP-dependent DNA helicase PIF3 from Trypanosoma brucei brucei (strain 927/4 GUTat10.1).